The following is a 994-amino-acid chain: Glycine dehydrogenase (decarboxylating) (994 aa).

The interval 1–20 (MTDHAENRCGLEGPRPFSSR) is disordered. At Lys716 the chain carries N6-(pyridoxal phosphate)lysine.

Belongs to the GcvP family. As to quaternary structure, the glycine cleavage system is composed of four proteins: P, T, L and H. It depends on pyridoxal 5'-phosphate as a cofactor.

The enzyme catalyses N(6)-[(R)-lipoyl]-L-lysyl-[glycine-cleavage complex H protein] + glycine + H(+) = N(6)-[(R)-S(8)-aminomethyldihydrolipoyl]-L-lysyl-[glycine-cleavage complex H protein] + CO2. The glycine cleavage system catalyzes the degradation of glycine. The P protein binds the alpha-amino group of glycine through its pyridoxal phosphate cofactor; CO(2) is released and the remaining methylamine moiety is then transferred to the lipoamide cofactor of the H protein. This chain is Glycine dehydrogenase (decarboxylating), found in Cutibacterium acnes (strain DSM 16379 / KPA171202) (Propionibacterium acnes).